The sequence spans 276 residues: NH(3)-dependent NAD(+) synthetase (276 aa).

43 to 50 contributes to the ATP binding site; the sequence is GISGGVDS. Aspartate 49 contacts Mg(2+). Residue arginine 146 coordinates deamido-NAD(+). Threonine 166 is a binding site for ATP. Mg(2+) is bound at residue glutamate 171. Deamido-NAD(+) is bound by residues lysine 179 and aspartate 186. 2 residues coordinate ATP: lysine 195 and threonine 217. Deamido-NAD(+) is bound at residue 266–267; the sequence is HK.

The protein belongs to the NAD synthetase family. As to quaternary structure, homodimer.

The enzyme catalyses deamido-NAD(+) + NH4(+) + ATP = AMP + diphosphate + NAD(+) + H(+). It participates in cofactor biosynthesis; NAD(+) biosynthesis; NAD(+) from deamido-NAD(+) (ammonia route): step 1/1. In terms of biological role, catalyzes the ATP-dependent amidation of deamido-NAD to form NAD. Uses ammonia as a nitrogen source. The protein is NH(3)-dependent NAD(+) synthetase of Aliivibrio salmonicida (strain LFI1238) (Vibrio salmonicida (strain LFI1238)).